The following is a 116-amino-acid chain: Large ribosomal subunit protein bL17 (116 aa).

This sequence belongs to the bacterial ribosomal protein bL17 family. Part of the 50S ribosomal subunit. Contacts protein L32.

This chain is Large ribosomal subunit protein bL17, found in Synechococcus sp. (strain JA-2-3B'a(2-13)) (Cyanobacteria bacterium Yellowstone B-Prime).